The sequence spans 185 residues: Endoribonuclease YbeY (185 aa).

Residues His-142, His-146, and His-152 each coordinate Zn(2+).

Belongs to the endoribonuclease YbeY family. It depends on Zn(2+) as a cofactor.

The protein resides in the cytoplasm. Its function is as follows. Single strand-specific metallo-endoribonuclease involved in late-stage 70S ribosome quality control and in maturation of the 3' terminus of the 16S rRNA. The polypeptide is Endoribonuclease YbeY (Parvibaculum lavamentivorans (strain DS-1 / DSM 13023 / NCIMB 13966)).